The primary structure comprises 168 residues: Photosystem I assembly protein Ycf3 (168 aa).

TPR repeat units follow at residues 35–68, 72–105, and 120–153; these read AFTY…EIDP, SYIL…NPFL, and GEQA…TPGN.

The protein belongs to the Ycf3 family.

Its subcellular location is the plastid. It localises to the chloroplast thylakoid membrane. Essential for the assembly of the photosystem I (PSI) complex. May act as a chaperone-like factor to guide the assembly of the PSI subunits. This is Photosystem I assembly protein Ycf3 from Amborella trichopoda.